Consider the following 108-residue polypeptide: Nucleoid-associated protein Avin_19840 (108 aa).

It belongs to the YbaB/EbfC family. In terms of assembly, homodimer.

It is found in the cytoplasm. It localises to the nucleoid. In terms of biological role, binds to DNA and alters its conformation. May be involved in regulation of gene expression, nucleoid organization and DNA protection. The sequence is that of Nucleoid-associated protein Avin_19840 from Azotobacter vinelandii (strain DJ / ATCC BAA-1303).